The following is a 195-amino-acid chain: HTH-type transcriptional regulator BetI (195 aa).

Positions 8–68 (EIRRAQLIDA…ATMRHVLRDL (61 aa)) constitute an HTH tetR-type domain. A DNA-binding region (H-T-H motif) is located at residues 31–50 (TLASVAQRASISTGIVSHYF).

It functions in the pathway amine and polyamine biosynthesis; betaine biosynthesis via choline pathway [regulation]. Repressor involved in the biosynthesis of the osmoprotectant glycine betaine. It represses transcription of the choline transporter BetT and the genes of BetAB involved in the synthesis of glycine betaine. The chain is HTH-type transcriptional regulator BetI from Paraburkholderia xenovorans (strain LB400).